A 300-amino-acid polypeptide reads, in one-letter code: Tyrosine recombinase XerC (300 aa).

A Core-binding (CB) domain is found at 2 to 88 (TQEGKLEQQF…SLRSFYTFLL (87 aa)). The Tyr recombinase domain maps to 109 to 294 (RLPKFFYSEE…TKEHLKSTYM (186 aa)). Active-site residues include R150, K174, H246, R249, and H272. The O-(3'-phospho-DNA)-tyrosine intermediate role is filled by Y281.

This sequence belongs to the 'phage' integrase family. XerC subfamily. As to quaternary structure, forms a cyclic heterotetrameric complex composed of two molecules of XerC and two molecules of XerD.

Its subcellular location is the cytoplasm. Site-specific tyrosine recombinase, which acts by catalyzing the cutting and rejoining of the recombining DNA molecules. The XerC-XerD complex is essential to convert dimers of the bacterial chromosome into monomers to permit their segregation at cell division. It also contributes to the segregational stability of plasmids. The polypeptide is Tyrosine recombinase XerC (Listeria monocytogenes serotype 4a (strain HCC23)).